Here is a 354-residue protein sequence, read N- to C-terminus: MRVADFTFELPDSLIARHPLAERRGSRLLTLDGPTGALAHRQFTDLLEHLRPGDLMVFNNTRVIPARLFGQKASGGKLEILVERVLDSHRVLAHVRSSKSPKPGSKILIDGGGEAEMLARHDTLFELGFAEEVLPLLDRVGHMPLPPYIDRPDEGADRERYQTVYAQRLGAVAAPTAGLHFDQPLLEAIAAKGVETAFVTLHVGAGTFQPVRVERIEDHHMHHEWLEVGQDVVDAVAACRARGGRVVAVGTTSVRSLESAARDGVLKPFSGDTDIFIYPGRPFHVVDALVTNFHLPESTLLMLVSAFAGYPETMAAYRAAVENGYRFFSYGDAMFITRNPAPTAPKDLAPEETV.

It belongs to the QueA family. As to quaternary structure, monomer.

It is found in the cytoplasm. It carries out the reaction 7-aminomethyl-7-carbaguanosine(34) in tRNA + S-adenosyl-L-methionine = epoxyqueuosine(34) in tRNA + adenine + L-methionine + 2 H(+). It participates in tRNA modification; tRNA-queuosine biosynthesis. Transfers and isomerizes the ribose moiety from AdoMet to the 7-aminomethyl group of 7-deazaguanine (preQ1-tRNA) to give epoxyqueuosine (oQ-tRNA). The sequence is that of S-adenosylmethionine:tRNA ribosyltransferase-isomerase from Pseudomonas fluorescens (strain ATCC BAA-477 / NRRL B-23932 / Pf-5).